The following is a 421-amino-acid chain: MHKLLKLAAMGTAACALLAGMAPVANAQEKQNVEVLHWWTSGGEASALEVLKKDLESKGISWTDMPVAGGGGTEAMTVLRARVTAGNAPTAVQMLGFDIRDWAKQGALGNLDTVASKEGWEKVIPAPLQEFAKYDGHWIAAPVNIHSTNWMWINKAALDKAGGKEPTNWDELIALLDNFKAQGITPIAHGGQPWQDATIFDAVVLSFGPDFYKKAFIDLDPEALGSDTMKQAFDRMSKLRTYVDDNFSGRDWNLASAMVIEGKAGVQFMGDWAKGEFLKAGKKPGEDFVCMRYPGTQGAVTFNSDMFAMFKVSEDKVPAQLEMASAIESPAFQSAFNVVKGSAPARTDVPDTAFDACGKKAIADVKEANSKGTLLGSMAHGYANPAAVKNAIYDVVTRQFNGQLSSEDAVKELVAAVEAAK.

The signal sequence occupies residues 1–27 (MHKLLKLAAMGTAACALLAGMAPVANA).

This sequence belongs to the bacterial solute-binding protein 1 family.

It localises to the periplasm. Functionally, part of a binding-protein-dependent transport system for a sugar. This is Probable sugar-binding periplasmic protein from Brucella suis biovar 1 (strain 1330).